A 506-amino-acid chain; its full sequence is Ribose import ATP-binding protein RbsA 2 (506 aa).

2 consecutive ABC transporter domains span residues 7-242 (LEMR…VGRP) and 250-497 (ERDI…TGVN). Residue 39-46 (GENGAGKS) participates in ATP binding.

It belongs to the ABC transporter superfamily. Ribose importer (TC 3.A.1.2.1) family. In terms of assembly, the complex is composed of an ATP-binding protein (RbsA), two transmembrane proteins (RbsC) and a solute-binding protein (RbsB).

It is found in the cell inner membrane. It carries out the reaction D-ribose(out) + ATP + H2O = D-ribose(in) + ADP + phosphate + H(+). In terms of biological role, part of the ABC transporter complex RbsABC involved in ribose import. Responsible for energy coupling to the transport system. The polypeptide is Ribose import ATP-binding protein RbsA 2 (Escherichia coli O157:H7).